Reading from the N-terminus, the 282-residue chain is Type 1 encapsulin shell protein (282 aa).

Belongs to the encapsulin family. Family 1 subfamily. Initially thought to form a 180 subunit shell. Forms hollow shells composed of 240 subunits, making a shell about 42-43 nm in diameter. The monomer is capable of assuming 4 different conformations which allows packaging into the icosahedron. The shell has 12 pentameric and 30 hexameric capsomers which form the vertices and faces of the icosahedral nanocompartment.

It localises to the encapsulin nanocompartment. Shell component of a type 1 encapsulin nanocompartment. Assembles into proteinaceous icosahedral shells 42-43 nm in diameter with an iron- and phosphorus-rich core (1Fe:1.1P) which can store over 23,000-35,000 iron atoms (with a calculated maximum of 83,000 Fe). There are 2 types of negatively charged open pores in the cryo-electron structure; a 3-fold pore where 3 hexamers meet with a minimal size of 7.2 Angstroms and a 5-fold pore where pentamers meet with a minimal size of 2.3 Angstroms. The 2-fold pore seen in other encapsulin nanocompartments is closed. Empty compartments can be generated in E.coli. Both types of pore have extra density in their centers in the structure. 2 different cargo proteins have been identified (IMEF and Fer); when both are expressed in E.coli with the shell protein only IMEF is detected within the nanocompartment. E.coli expressing all 3 genes stores the largest amount of iron and is protected from Fe/H2O2-induced oxidative stress. Part of the iron-mineralizing encapsulin-associated Firmicute (IMEF) system. The chain is Type 1 encapsulin shell protein from Bacillus thermotolerans (Quasibacillus thermotolerans).